Here is a 171-residue protein sequence, read N- to C-terminus: Nucleoside-triphosphatase THEP1 (171 aa).

ATP-binding positions include 8-15 (GPPGAGKS) and 95-102 (VYLIDEIG).

This sequence belongs to the THEP1 NTPase family.

It carries out the reaction a ribonucleoside 5'-triphosphate + H2O = a ribonucleoside 5'-diphosphate + phosphate + H(+). Has nucleotide phosphatase activity towards ATP, GTP, CTP, TTP and UTP. May hydrolyze nucleoside diphosphates with lower efficiency. This chain is Nucleoside-triphosphatase THEP1, found in Ignicoccus hospitalis (strain KIN4/I / DSM 18386 / JCM 14125).